We begin with the raw amino-acid sequence, 81 residues long: Acyl carrier protein (81 aa).

Positions 1-79 constitute a Carrier domain; it reads MDVAAMQVKI…DIFDYLAKNK (79 aa). O-(pantetheine 4'-phosphoryl)serine is present on serine 39.

It belongs to the acyl carrier protein (ACP) family. In terms of processing, 4'-phosphopantetheine is transferred from CoA to a specific serine of apo-ACP by AcpS. This modification is essential for activity because fatty acids are bound in thioester linkage to the sulfhydryl of the prosthetic group.

The protein resides in the cytoplasm. The protein operates within lipid metabolism; fatty acid biosynthesis. Its function is as follows. Carrier of the growing fatty acid chain in fatty acid biosynthesis. This chain is Acyl carrier protein, found in Syntrophobacter fumaroxidans (strain DSM 10017 / MPOB).